The primary structure comprises 1520 residues: Accessory colonization factor AcfD (1520 aa).

The first 16 residues, 1–16 (MKIRIVSLIVLGFLIG), serve as a signal peptide directing secretion. Cys-17 carries N-palmitoyl cysteine lipidation. A lipid anchor (S-diacylglycerol cysteine) is attached at Cys-17. The 304-residue stretch at 1085–1388 (GNRQPTGQWA…MFAQLKEWAE (304 aa)) folds into the Peptidase M60 domain.

It is found in the cell membrane. The chain is Accessory colonization factor AcfD (acfD) from Vibrio cholerae serotype O1 (strain ATCC 39315 / El Tor Inaba N16961).